The sequence spans 452 residues: Tubulin alpha-1 chain (452 aa).

Residue Gln-11 coordinates GTP. Lys-40 is modified (N6-acetyllysine). GTP is bound by residues Glu-71, Ser-140, Gly-144, Thr-145, Thr-179, Asn-206, and Asn-228. Residue Glu-71 coordinates Mg(2+). Glu-254 is an active-site residue. Residues 433-452 (EEVGVDSADAEGEEEEGDEY) are disordered.

This sequence belongs to the tubulin family. As to quaternary structure, dimer of alpha and beta chains. A typical microtubule is a hollow water-filled tube with an outer diameter of 25 nm and an inner diameter of 15 nM. Alpha-beta heterodimers associate head-to-tail to form protofilaments running lengthwise along the microtubule wall with the beta-tubulin subunit facing the microtubule plus end conferring a structural polarity. Microtubules usually have 13 protofilaments but different protofilament numbers can be found in some organisms and specialized cells. Mg(2+) serves as cofactor. Undergoes a tyrosination/detyrosination cycle, the cyclic removal and re-addition of a C-terminal tyrosine residue by the enzymes tubulin tyrosine carboxypeptidase (TTCP) and tubulin tyrosine ligase (TTL), respectively. In terms of processing, acetylation of alpha chains at Lys-40 stabilizes microtubules and affects affinity and processivity of microtubule motors. This modification has a role in multiple cellular functions, ranging from cell motility, cell cycle progression or cell differentiation to intracellular trafficking and signaling.

The protein resides in the cytoplasm. It localises to the cytoskeleton. It catalyses the reaction GTP + H2O = GDP + phosphate + H(+). In terms of biological role, tubulin is the major constituent of microtubules, a cylinder consisting of laterally associated linear protofilaments composed of alpha- and beta-tubulin heterodimers. Microtubules grow by the addition of GTP-tubulin dimers to the microtubule end, where a stabilizing cap forms. Below the cap, tubulin dimers are in GDP-bound state, owing to GTPase activity of alpha-tubulin. This Paracentrotus lividus (Common sea urchin) protein is Tubulin alpha-1 chain.